The chain runs to 115 residues: UPF0235 protein CTA_0423 (115 aa).

The protein belongs to the UPF0235 family.

This is UPF0235 protein CTA_0423 from Chlamydia trachomatis serovar A (strain ATCC VR-571B / DSM 19440 / HAR-13).